Reading from the N-terminus, the 474-residue chain is tRNA-2-methylthio-N(6)-dimethylallyladenosine synthase (474 aa).

An MTTase N-terminal domain is found at 3 to 120; it reads KKLHIKTWGC…LPEMINSVRG (118 aa). Cys12, Cys49, Cys83, Cys157, Cys161, and Cys164 together coordinate [4Fe-4S] cluster. The region spanning 143 to 375 is the Radical SAM core domain; it reads RAEGPTAFVS…QERINQQAMA (233 aa). The 64-residue stretch at 378–441 folds into the TRAM domain; sequence RRMLGTTQRI…PNSLRGKVVR (64 aa).

The protein belongs to the methylthiotransferase family. MiaB subfamily. In terms of assembly, monomer. The cofactor is [4Fe-4S] cluster.

The protein localises to the cytoplasm. It catalyses the reaction N(6)-dimethylallyladenosine(37) in tRNA + (sulfur carrier)-SH + AH2 + 2 S-adenosyl-L-methionine = 2-methylsulfanyl-N(6)-dimethylallyladenosine(37) in tRNA + (sulfur carrier)-H + 5'-deoxyadenosine + L-methionine + A + S-adenosyl-L-homocysteine + 2 H(+). In terms of biological role, catalyzes the methylthiolation of N6-(dimethylallyl)adenosine (i(6)A), leading to the formation of 2-methylthio-N6-(dimethylallyl)adenosine (ms(2)i(6)A) at position 37 in tRNAs that read codons beginning with uridine. This Escherichia coli (strain SMS-3-5 / SECEC) protein is tRNA-2-methylthio-N(6)-dimethylallyladenosine synthase.